The chain runs to 198 residues: Leucine-rich melanocyte differentiation-associated protein (198 aa).

LRR repeat units lie at residues 2–22, 26–47, 48–69, and 75–95; these read EKYL…EGLS, SLEE…PGLP, RLHT…LDHL, and ALEY…VSLE. Residues 96 to 134 enclose the LRRCT domain; the sequence is KDEEDYKRYRCFVLYKLPNLKFLDAQKVTRQEREEALVR.

In the embryo, expressed in melanoblasts. In the fetus, expressed in melanocytes. Not detected in retinal pigment epithelial cells.

Required for melanocyte differentiation. The chain is Leucine-rich melanocyte differentiation-associated protein from Homo sapiens (Human).